We begin with the raw amino-acid sequence, 489 residues long: Lysine--tRNA ligase (489 aa).

Residues Glu-399 and Glu-406 each coordinate Mg(2+).

This sequence belongs to the class-II aminoacyl-tRNA synthetase family. Homodimer. Mg(2+) serves as cofactor.

It localises to the cytoplasm. The catalysed reaction is tRNA(Lys) + L-lysine + ATP = L-lysyl-tRNA(Lys) + AMP + diphosphate. In Roseiflexus castenholzii (strain DSM 13941 / HLO8), this protein is Lysine--tRNA ligase.